The following is a 200-amino-acid chain: Large ribosomal subunit protein uL4 (200 aa).

Residues 38–80 (GRQGSKQQKTRSDVSGGGKRPWRQKGTGRARAGTTRGPIWRGG) form a disordered region.

This sequence belongs to the universal ribosomal protein uL4 family. In terms of assembly, part of the 50S ribosomal subunit.

Its function is as follows. One of the primary rRNA binding proteins, this protein initially binds near the 5'-end of the 23S rRNA. It is important during the early stages of 50S assembly. It makes multiple contacts with different domains of the 23S rRNA in the assembled 50S subunit and ribosome. Functionally, forms part of the polypeptide exit tunnel. The sequence is that of Large ribosomal subunit protein uL4 from Stutzerimonas stutzeri (strain A1501) (Pseudomonas stutzeri).